Here is a 364-residue protein sequence, read N- to C-terminus: Probable mannose-1-phosphate guanylyltransferase 2 (364 aa).

Residues leucine 6 and valine 7 each coordinate GDP-alpha-D-mannose. Positions 9, 11, 12, 13, and 23 each coordinate diphosphate. Glycine 88, asparagine 112, aspartate 114, glycine 149, and asparagine 176 together coordinate GDP-alpha-D-mannose.

This sequence belongs to the transferase hexapeptide repeat family.

The catalysed reaction is alpha-D-mannose 1-phosphate + GTP + H(+) = GDP-alpha-D-mannose + diphosphate. It functions in the pathway nucleotide-sugar biosynthesis; GDP-alpha-D-mannose biosynthesis; GDP-alpha-D-mannose from alpha-D-mannose 1-phosphate (GTP route): step 1/1. Catalyzes a reaction of the Smirnoff-Wheeler pathway, the major route to ascorbate biosynthesis in plants. This is Probable mannose-1-phosphate guanylyltransferase 2 from Arabidopsis thaliana (Mouse-ear cress).